The following is a 355-amino-acid chain: Protein RecA (355 aa).

69–76 (GPESSGKT) serves as a coordination point for ATP. The interval 329–355 (AYGLPDREETKREETAQIPDTEKTKDV) is disordered.

Belongs to the RecA family.

The protein localises to the cytoplasm. Can catalyze the hydrolysis of ATP in the presence of single-stranded DNA, the ATP-dependent uptake of single-stranded DNA by duplex DNA, and the ATP-dependent hybridization of homologous single-stranded DNAs. It interacts with LexA causing its activation and leading to its autocatalytic cleavage. The sequence is that of Protein RecA from Desulfotalea psychrophila (strain LSv54 / DSM 12343).